The primary structure comprises 385 residues: tRNA(Met) cytidine acetate ligase (385 aa).

Residues 7–20, glycine 101, asparagine 153, and arginine 178 each bind ATP; that span reads VAEY…HEFL.

This sequence belongs to the TmcAL family.

It is found in the cytoplasm. The enzyme catalyses cytidine(34) in elongator tRNA(Met) + acetate + ATP = N(4)-acetylcytidine(34) in elongator tRNA(Met) + AMP + diphosphate. Catalyzes the formation of N(4)-acetylcytidine (ac(4)C) at the wobble position of elongator tRNA(Met), using acetate and ATP as substrates. First activates an acetate ion to form acetyladenylate (Ac-AMP) and then transfers the acetyl group to tRNA to form ac(4)C34. The sequence is that of tRNA(Met) cytidine acetate ligase from Lactobacillus gasseri (strain ATCC 33323 / DSM 20243 / BCRC 14619 / CIP 102991 / JCM 1131 / KCTC 3163 / NCIMB 11718 / NCTC 13722 / AM63).